A 790-amino-acid polypeptide reads, in one-letter code: AMP deaminase (790 aa).

The segment covering 1-14 (MSTPLRGSSPQVSF) has biased composition (polar residues). The interval 1 to 26 (MSTPLRGSSPQVSFYESELDQEGGSD) is disordered. His-221 and His-223 together coordinate Zn(2+). Residues His-223 and 292–297 (KFNLKY) contribute to the substrate site. Residue His-488 coordinates Zn(2+). Glu-491 is a binding site for substrate. The Proton acceptor role is filled by His-510. Asp-565 contributes to the Zn(2+) binding site. Residue 566–569 (DPLQ) participates in substrate binding. Disordered stretches follow at residues 698-726 (NKLR…SSPG) and 739-790 (PPPL…KSDK). Low complexity-rich tracts occupy residues 706–726 (GSTP…SSPG) and 750–781 (NNNN…TTTN).

It belongs to the metallo-dependent hydrolases superfamily. Adenosine and AMP deaminases family. As to quaternary structure, homodimer. The cofactor is Zn(2+).

The protein localises to the cytoplasm. It catalyses the reaction AMP + H2O + H(+) = IMP + NH4(+). The protein operates within purine metabolism; IMP biosynthesis via salvage pathway; IMP from AMP: step 1/1. With respect to regulation, activated by ATP, inhibited by GTP, EDTA and inorganic phosphate. Functionally, catalyzes the conversion of adenosine monophosphate (AMP) to inosine monophosphate (IMP) and ammonia (NH4(+)). Participates in the regulation of the adenylated nucleotide pool and the interconversion to guanylated nucleotides during early morphodifferentiation. The chain is AMP deaminase (amdA) from Dictyostelium discoideum (Social amoeba).